The following is a 195-amino-acid chain: Ferredoxin-2, mitochondrial (195 aa).

Residues 1–61 (MAAAAAVRAG…RRLRTSIGVC (61 aa)) constitute a mitochondrion transit peptide. One can recognise a 2Fe-2S ferredoxin-type domain in the interval 81-182 (NVVYIDRSGR…GMELTLPKVT (102 aa)). C117, C123, C126, and C163 together coordinate [2Fe-2S] cluster.

The protein belongs to the adrenodoxin/putidaredoxin family. In terms of assembly, component of the mitochondrial core iron-sulfur cluster (ISC) complex composed of NFS1, LYRM4, NDUFAB1, ISCU, FXN, and FDX2; this complex is a heterohexamer containing two copies of each monomer. Form a heterodimer complex with NFS1. It depends on [2Fe-2S] cluster as a cofactor.

It is found in the mitochondrion. Its subcellular location is the mitochondrion matrix. Electron donor, of the core iron-sulfur cluster (ISC) assembly complex, that acts to reduce the persulfide into sulfide during [2Fe-2S] clusters assembly on the scaffolding protein ISCU. The core iron-sulfur cluster (ISC) assembly complex is involved in the de novo synthesis of a [2Fe-2S] cluster, the first step of the mitochondrial iron-sulfur protein biogenesis. This process is initiated by the cysteine desulfurase complex (NFS1:LYRM4:NDUFAB1) that produces persulfide which is delivered on the scaffold protein ISCU in a FXN-dependent manner. Then this complex is stabilized by FDX2 which provides reducing equivalents to accomplish the [2Fe-2S] cluster assembly. Finally, the [2Fe-2S] cluster is transferred from ISCU to chaperone proteins, including HSCB, HSPA9 and GLRX5. Essential for coenzyme Q biosynthesis: together with FDXR, transfers the electrons required for the hydroxylation reaction performed by COQ6. The sequence is that of Ferredoxin-2, mitochondrial from Danio rerio (Zebrafish).